We begin with the raw amino-acid sequence, 487 residues long: Serine/threonine-protein kinase 4 (487 aa).

N-acetylmethionine is present on Met-1. Thr-3 bears the Phosphothreonine mark. The 252-residue stretch at 30-281 folds into the Protein kinase domain; the sequence is FDVLEKLGEG…ATQLLQHPFV (252 aa). ATP-binding positions include 36–44 and Lys-59; that span reads LGEGSYGSV. Catalysis depends on Asp-149, which acts as the Proton acceptor. Thr-183 carries the post-translational modification Phosphothreonine; by autocatalysis. A Phosphoserine modification is found at Ser-265. Residues 290-310 are a coiled coil; sequence LRDLINEAMDVKLKRQEAQQR. Residues 305–338 form a disordered region; sequence QEAQQREVDQDDEENSEEDELDSGTMVRAVGDDM. Acidic residues predominate over residues 313–326; the sequence is DQDDEENSEEDELD. A Phosphoserine modification is found at Ser-320. Phosphothreonine is present on residues Thr-340 and Thr-367. Residue Thr-387 is modified to Phosphothreonine; by PKB/AKT1. Phosphoserine is present on residues Ser-410 and Ser-414. At Tyr-433 the chain carries Phosphotyrosine. The SARAH domain maps to 433–480; it reads YEFLKSWTVEDLQKRLLALDPMMEQEIEEIRQKYQSKRQPILDAIEAK.

It belongs to the protein kinase superfamily. STE Ser/Thr protein kinase family. STE20 subfamily. Homodimer; mediated via the coiled-coil region. Interacts with NORE1, which inhibits autoactivation. Interacts with and stabilizes SAV1. Interacts with RASSF1. Interacts with FOXO3. Interacts with RASSF2 (via SARAH domain). Interacts with AR, PKB/AKT1, TNNI3 and SIRT1. Interacts with DLG5 (via PDZ domain 3). Interacts with MARK3 and SCRIB in the presence of DLG5. Mg(2+) is required as a cofactor. Autophosphorylated on serine and threonine residues. Phosphorylation at Thr-387 by PKB/AKT1, leads to inhibition of its: kinase activity, nuclear translocation and autophosphorylation at Thr-183. It also diminishes its cleavage by caspases and its ability to phosphorylate FOXO3. In terms of processing, proteolytically cleaved by caspase-3 during apoptosis at Asp-326 and Asp-349 resulting in a 37 kDa or a 39 kDa subunit respectively. The 39 kDa subunit is further cleaved into the 37 kDa form. Proteolytic cleavage results in kinase activation and nuclear translocation of the truncated form (MST1/N). It is less likely that cleavage at Asp-349 is a prerequisite for activation as this site is not conserved in the murine ortholog.

It is found in the cytoplasm. The protein localises to the nucleus. The enzyme catalyses L-seryl-[protein] + ATP = O-phospho-L-seryl-[protein] + ADP + H(+). It catalyses the reaction L-threonyl-[protein] + ATP = O-phospho-L-threonyl-[protein] + ADP + H(+). Inhibited by the C-terminal non-catalytic region. Activated by caspase-cleavage. Full activation also requires homodimerization and autophosphorylation of Thr-183. Activated by RASSF1 which acts by preventing its dephosphorylation. Functionally, stress-activated, pro-apoptotic kinase which, following caspase-cleavage, enters the nucleus and induces chromatin condensation followed by internucleosomal DNA fragmentation. Key component of the Hippo signaling pathway which plays a pivotal role in organ size control and tumor suppression by restricting proliferation and promoting apoptosis. The core of this pathway is composed of a kinase cascade wherein STK3/MST2 and STK4/MST1, in complex with its regulatory protein SAV1, phosphorylates and activates LATS1/2 in complex with its regulatory protein MOB1, which in turn phosphorylates and inactivates YAP1 oncoprotein and WWTR1/TAZ. Phosphorylation of YAP1 by LATS2 inhibits its translocation into the nucleus to regulate cellular genes important for cell proliferation, cell death, and cell migration. STK3/MST2 and STK4/MST1 are required to repress proliferation of mature hepatocytes, to prevent activation of facultative adult liver stem cells (oval cells), and to inhibit tumor formation. Phosphorylates 'Ser-14' of histone H2B (H2BS14ph) during apoptosis. Phosphorylates FOXO3 upon oxidative stress, which results in its nuclear translocation and cell death initiation. Phosphorylates MOBKL1A, MOBKL1B and RASSF2. Phosphorylates TNNI3 (cardiac Tn-I) and alters its binding affinity to TNNC1 (cardiac Tn-C) and TNNT2 (cardiac Tn-T). Phosphorylates FOXO1 on 'Ser-212' and regulates its activation and stimulates transcription of PMAIP1 in a FOXO1-dependent manner. Phosphorylates SIRT1 and inhibits SIRT1-mediated p53/TP53 deacetylation, thereby promoting p53/TP53 dependent transcription and apoptosis upon DNA damage. Acts as an inhibitor of PKB/AKT1. Phosphorylates AR on 'Ser-650' and suppresses its activity by intersecting with PKB/AKT1 signaling and antagonizing formation of AR-chromatin complexes. This chain is Serine/threonine-protein kinase 4 (STK4), found in Lemur catta (Ring-tailed lemur).